A 932-amino-acid chain; its full sequence is MRRIEIVLGELERLTRGLCLADLAQETAFTAEAIGFNLGLARNSVSKDLNQLWNDGLAIKSRGRPVYFLHRQALETLLGRQLEESEREVRSVADVLPHEEHYAPDDPFTSLIGYDRSLRDAVEKGRAAVLYPHGLHVLLTGPSGVGKTFFAELMHRFACEQASGAIPPLVYFNCAEYAHNPELLSSHLFGHRQGAFTGANEHKTGLVEQADGGYLLLDEVHRLSYEGQEKLFSILDKGEYRPLGVSSQPRSISVRLICATTEPVGSALLRTFQRRIQVCIDLPGIHQRSVEEQIELIVGFLQRESRKIERTVSIDKPLLLWLLNKPLEGNIGQLKSDIQFLCAQAWASGMTEHNDTLQLDKRLAEMSVNPTPEQRLLVDTLFEGKARLNIDARTLPALKTSLATGAEIEESDLFYSFLTREYVNLRNSNVPPAETLAILKNKLSSIFEYGLYSRDSVAHPPRYGDQIEERVTLLIGCVEQVLGFSLPENLVNPLRKHFLALIGYVQRGLIPQLYSSSLILDRCKDEYDNATLLCRKINELLHIQCPATEVVWLCLFLKECRHYRQRIDASPDCGVILIAHGATTATSQAQYVNRVLERELFSAIDMPFEQSVHDTLETLTQMIQTRQYRRLILLVDIGSLIHFGSTISKLFQIDVLLMPNITLTSLLEVGLDLSYETSDLPQLTALLQSKNIPCQLCTPQQENGGKVLVISCITGMGTAEKIKKVLEESFGELMSQDTRMVILDYNEVRSLERVQQALNASERLAGIVGTFQPGLPDIPFISLEELFSEQGPELVLSLLTPDLSNAERRLEMERSAMRFISALTMESIINHISVLNPQRILKEMEGVFNHLTSSLSLKPSRQVTLRFLIHCCCMVERIVINRKPLQMALESQPNLDARAFSVIKSAFLPIEDAYAIRLSDAEYFYIYELLYS.

A Sigma-54 factor interaction domain is found at 111 to 343 (LIGYDRSLRD…LKSDIQFLCA (233 aa)). Residues 141–148 (GPSGVGKT) and 210–219 (ADGGYLLLDE) contribute to the ATP site. Residues 462 to 567 (RYGDQIEERV…KECRHYRQRI (106 aa)) form the PRD 1 domain. Phosphohistidine is present on His-497. A PTS EIIA type-4 domain is found at 572–708 (DCGVILIAHG…PQQENGGKVL (137 aa)). Residue His-580 is the Tele-phosphohistidine intermediate of the active site. Residues 835-932 (LNPQRILKEM…YFYIYELLYS (98 aa)) enclose the PRD 2 domain. His-870 carries the post-translational modification Phosphohistidine.

Involved in the regulation of the catabolism of D-glucosaminate. This is Transcriptional regulatory protein DagR (dgaR) from Salmonella typhimurium (strain 14028s / SGSC 2262).